A 124-amino-acid polypeptide reads, in one-letter code: Small ribosomal subunit protein uS12 (124 aa).

Asp89 is modified (3-methylthioaspartic acid).

Belongs to the universal ribosomal protein uS12 family. As to quaternary structure, part of the 30S ribosomal subunit. Contacts proteins S8 and S17. May interact with IF1 in the 30S initiation complex.

Functionally, with S4 and S5 plays an important role in translational accuracy. Interacts with and stabilizes bases of the 16S rRNA that are involved in tRNA selection in the A site and with the mRNA backbone. Located at the interface of the 30S and 50S subunits, it traverses the body of the 30S subunit contacting proteins on the other side and probably holding the rRNA structure together. The combined cluster of proteins S8, S12 and S17 appears to hold together the shoulder and platform of the 30S subunit. The protein is Small ribosomal subunit protein uS12 of Blochmanniella pennsylvanica (strain BPEN).